A 310-amino-acid polypeptide reads, in one-letter code: Protein BIG GRAIN 1 (310 aa).

The segment at 81–141 (RAPGPHATTS…KKAKKPGASI (61 aa)) is disordered. A compositionally biased stretch (low complexity) spans 90 to 106 (SSSSECSSYGGFSSSEA).

The protein belongs to the BIG GRAIN 1 (BG1) plant protein family.

It localises to the cell membrane. Functionally, involved in auxin transport. Positive regulator of the auxin signaling pathway involved in gravitropism, plant growth and grain development. In Oryza sativa subsp. indica (Rice), this protein is Protein BIG GRAIN 1.